Here is a 368-residue protein sequence, read N- to C-terminus: Alanine racemase (368 aa).

K40 functions as the Proton acceptor; specific for D-alanine in the catalytic mechanism. The residue at position 40 (K40) is an N6-(pyridoxal phosphate)lysine. R136 contributes to the substrate binding site. Y263 (proton acceptor; specific for L-alanine) is an active-site residue. Position 310 (M310) interacts with substrate.

The protein belongs to the alanine racemase family. Requires pyridoxal 5'-phosphate as cofactor.

It carries out the reaction L-alanine = D-alanine. It participates in amino-acid biosynthesis; D-alanine biosynthesis; D-alanine from L-alanine: step 1/1. Functionally, catalyzes the interconversion of L-alanine and D-alanine. May also act on other amino acids. The protein is Alanine racemase (alr) of Streptococcus uberis (strain ATCC BAA-854 / 0140J).